Here is a 313-residue protein sequence, read N- to C-terminus: 7,8-didemethyl-8-hydroxy-5-deazariboflavin synthase (313 aa).

Residues 4 to 235 enclose the Radical SAM core domain; sequence ITYSPAYTLV…AEITLQIPPN (232 aa). [4Fe-4S] cluster is bound by residues Cys-18, Cys-22, and Cys-25.

The protein belongs to the radical SAM superfamily. CofG family. As to quaternary structure, consists of two subunits, CofG and CofH. The cofactor is [4Fe-4S] cluster.

The enzyme catalyses 5-amino-5-(4-hydroxybenzyl)-6-(D-ribitylimino)-5,6-dihydrouracil + S-adenosyl-L-methionine = 7,8-didemethyl-8-hydroxy-5-deazariboflavin + 5'-deoxyadenosine + L-methionine + NH4(+) + H(+). The protein operates within cofactor biosynthesis; coenzyme F0 biosynthesis. In terms of biological role, catalyzes the radical-mediated synthesis of 7,8-didemethyl-8-hydroxy-5-deazariboflavin from 5-amino-5-(4-hydroxybenzyl)-6-(D-ribitylimino)-5,6-dihydrouracil. The polypeptide is 7,8-didemethyl-8-hydroxy-5-deazariboflavin synthase (Synechocystis sp. (strain ATCC 27184 / PCC 6803 / Kazusa)).